Here is a 252-residue protein sequence, read N- to C-terminus: Carbohydrate deacetylase (252 aa).

2 residues coordinate Mg(2+): H59 and H122.

This sequence belongs to the YdjC deacetylase family. In terms of assembly, homodimer. The cofactor is Mg(2+).

Probably catalyzes the deacetylation of acetylated carbohydrates an important step in the degradation of oligosaccharides. This Vibrio cholerae serotype O1 (strain ATCC 39315 / El Tor Inaba N16961) protein is Carbohydrate deacetylase.